The primary structure comprises 217 residues: Nucleoside diphosphate-linked moiety X motif 6 (217 aa).

Residues 42 to 177 (THQVGVAGAV…VAKLLLYGYN (136 aa)) form the Nudix hydrolase domain. Residues 77–98 (GLSDQGEDIGATAVREVLEETG) carry the Nudix box motif.

It belongs to the Nudix hydrolase family. In terms of tissue distribution, detected in liver (at protein level).

The protein resides in the cytoplasm. Its subcellular location is the nucleus. It localises to the mitochondrion. In terms of biological role, may contribute to the regulation of cell proliferation. This is Nucleoside diphosphate-linked moiety X motif 6 (nudt6) from Xenopus laevis (African clawed frog).